The following is a 317-amino-acid chain: Osteopontin (317 aa).

Residues 1–16 (MRLAVVCFCLFGLASC) form the signal peptide. 5 positions are modified to phosphoserine: Ser26, Ser27, Ser60, Ser62, and Ser63. The segment at 43–297 (WLKPDPSQKQ…LVLDPKSKED (255 aa)) is disordered. The segment covering 49 to 63 (SQKQNLLAPQNSVSS) has biased composition (polar residues). Residue Thr66 is modified to Phosphothreonine. Ser76, Ser78, Ser81, Ser106, Ser109, Ser112, Ser115, and Ser118 each carry phosphoserine. Over residues 86 to 110 (DDDDDDDDDGDHAESEDSVNSDESD) the composition is skewed to acidic residues. O-linked (GalNAc...) threonine glycans are attached at residues Thr123, Thr132, and Thr137. Residues 144 to 146 (RGD) carry the Cell attachment site motif. 2 positions are modified to phosphothreonine: Thr170 and Thr175. The segment covering 174–187 (LTSRMKSQESDEAI) has biased composition (basic and acidic residues). Phosphoserine is present on residues Ser176, Ser180, Ser200, Ser204, Ser209, Ser213, and Ser219. Residues 197–216 (SVPSDQDSNGKTSHESSQLD) show a composition bias toward polar residues. Ser219 carries O-linked (Xyl...) (chondroitin sulfate) serine glycosylation. The residue at position 222 (Thr222) is a Phosphothreonine. Basic and acidic residues-rich tracts occupy residues 223 to 240 (HSLE…HEST) and 248 to 263 (SAEK…RSDA). Phosphoserine is present on residues Ser224, Ser228, Ser257, Ser261, Ser266, Ser270, Ser273, Ser278, Ser283, Ser294, Ser306, Ser311, Ser313, and Ser314. Over residues 273–297 (SLEHQSHEFHSHEDKLVLDPKSKED) the composition is skewed to basic and acidic residues. A glycan (O-linked (Xyl...) (chondroitin sulfate) serine) is linked at Ser311.

It belongs to the osteopontin family. Interacts (via N-terminus) with integrin ITGA9:ITGB1. Post-translationally, extensively phosphorylated by FAM20C in the extracellular medium at multiple sites within the S-x-E/pS motif. The phosphorylated form inhibits hydroxyapatite crystallization. Dephosphorylation via a mechanism involving ALPL/TNAP promotes hydroxyapatite crystallization. O-glycosylated. In terms of processing, forms covalent cross-links mediated by transglutaminase TGM2, between a glutamine and the epsilon-amino group of a lysine residue, forming homopolymers and heteropolymers, increasing its collagen binding properties.

The protein resides in the secreted. In terms of biological role, major non-collagenous bone protein that binds tightly to hydroxyapatite. Appears to form an integral part of the mineralized matrix. Probably important to cell-matrix interaction. Functionally, acts as a cytokine involved in enhancing production of interferon-gamma and interleukin-12 and reducing production of interleukin-10 and is essential in the pathway that leads to type I immunity. The sequence is that of Osteopontin (Spp1) from Rattus norvegicus (Rat).